Reading from the N-terminus, the 101-residue chain is Small ribosomal subunit protein uS10 (101 aa).

The protein belongs to the universal ribosomal protein uS10 family. In terms of assembly, part of the 30S ribosomal subunit.

Functionally, involved in the binding of tRNA to the ribosomes. This chain is Small ribosomal subunit protein uS10, found in Anaeromyxobacter dehalogenans (strain 2CP-C).